Reading from the N-terminus, the 100-residue chain is uncharacterized protein (100 aa).

Residues 78-100 (NNGNLDFKGRADERRQPVSNLRM) are disordered. A compositionally biased stretch (basic and acidic residues) spans 84-93 (FKGRADERRQ).

This is an uncharacterized protein from Saccharomyces cerevisiae (strain ATCC 204508 / S288c) (Baker's yeast).